A 339-amino-acid polypeptide reads, in one-letter code: DNA-directed RNA polymerase subunit alpha (339 aa).

The interval 1–234 is alpha N-terminal domain (alpha-NTD); sequence MIEKNWQELI…DQFQIFINFE (234 aa). The tract at residues 251-339 is alpha C-terminal domain (alpha-CTD); sequence FNPALLRKVD…DLAKRFEDHV (89 aa).

The protein belongs to the RNA polymerase alpha chain family. As to quaternary structure, homodimer. The RNAP catalytic core consists of 2 alpha, 1 beta, 1 beta' and 1 omega subunit. When a sigma factor is associated with the core the holoenzyme is formed, which can initiate transcription.

It carries out the reaction RNA(n) + a ribonucleoside 5'-triphosphate = RNA(n+1) + diphosphate. In terms of biological role, DNA-dependent RNA polymerase catalyzes the transcription of DNA into RNA using the four ribonucleoside triphosphates as substrates. In Maricaulis maris (strain MCS10) (Caulobacter maris), this protein is DNA-directed RNA polymerase subunit alpha.